Consider the following 135-residue polypeptide: DNA-binding protein inhibitor ID-2-B (135 aa).

Residues 23–75 (ARSKAPVDEPMSLLYNMNDCYSKLKELVPSIPPNKKVSKMEILQHVIDYILDL) enclose the bHLH domain. Residues 108–117 (LNTDISILSL) carry the Nuclear export signal motif.

In terms of assembly, heterodimer with other HLH proteins.

The protein resides in the cytoplasm. It localises to the nucleus. Its function is as follows. Transcriptional regulator (lacking a basic DNA binding domain) which negatively regulates the basic helix-loop-helix (bHLH) transcription factors by forming heterodimers and inhibiting their DNA binding and transcriptional activity. Inhibits the activity of both neurogenic (neurod1/neuroD) and myogenic (myod1/myoD) bHLH factors. May play a role in the regulation of the circadian clock. The polypeptide is DNA-binding protein inhibitor ID-2-B (id2-b) (Xenopus laevis (African clawed frog)).